We begin with the raw amino-acid sequence, 294 residues long: Dof zinc finger protein DOF4.1 (294 aa).

The segment at 68 to 122 (RNCPRCNSSNTKFCYYNNYSLAQPRYLCKSCRRYWTEGGSLRNVPVGGGSRKNKK) adopts a Dof-type zinc-finger fold. Residues Cys70, Cys73, Cys95, and Cys98 each coordinate Zn(2+). Disordered stretches follow at residues 109 to 178 (RNVP…DKRA) and 247 to 294 (MYPY…GPTW). 2 stretches are compositionally biased toward polar residues: residues 126–136 (PNSSTSSSTKN) and 157–173 (KTHQ…SSPM). Over residues 251–273 (GDHEDRQQHHHVRHDDGNKKREG) the composition is skewed to basic and acidic residues. Residues 284 to 294 (ILGGDSGGPTW) are compositionally biased toward gly residues.

It is found in the nucleus. In terms of biological role, transcription factor that binds specifically to a 5'-AA[AG]G-3' consensus core sequence. The protein is Dof zinc finger protein DOF4.1 (DOF4.1) of Arabidopsis thaliana (Mouse-ear cress).